An 86-amino-acid chain; its full sequence is Small ribosomal subunit protein bS20 (86 aa).

The protein belongs to the bacterial ribosomal protein bS20 family.

In terms of biological role, binds directly to 16S ribosomal RNA. The chain is Small ribosomal subunit protein bS20 from Bifidobacterium adolescentis (strain ATCC 15703 / DSM 20083 / NCTC 11814 / E194a).